A 101-amino-acid polypeptide reads, in one-letter code: NAD(P)H-quinone oxidoreductase subunit 4L, chloroplastic (101 aa).

3 consecutive transmembrane segments (helical) span residues methionine 2–isoleucine 22, methionine 32–phenylalanine 52, and isoleucine 61–valine 81.

Belongs to the complex I subunit 4L family. As to quaternary structure, NDH is composed of at least 16 different subunits, 5 of which are encoded in the nucleus.

The protein resides in the plastid. Its subcellular location is the chloroplast thylakoid membrane. The catalysed reaction is a plastoquinone + NADH + (n+1) H(+)(in) = a plastoquinol + NAD(+) + n H(+)(out). It carries out the reaction a plastoquinone + NADPH + (n+1) H(+)(in) = a plastoquinol + NADP(+) + n H(+)(out). Its function is as follows. NDH shuttles electrons from NAD(P)H:plastoquinone, via FMN and iron-sulfur (Fe-S) centers, to quinones in the photosynthetic chain and possibly in a chloroplast respiratory chain. The immediate electron acceptor for the enzyme in this species is believed to be plastoquinone. Couples the redox reaction to proton translocation, and thus conserves the redox energy in a proton gradient. The chain is NAD(P)H-quinone oxidoreductase subunit 4L, chloroplastic from Jasminum nudiflorum (Winter jasmine).